A 267-amino-acid chain; its full sequence is Matrilysin (267 aa).

Residues 1-20 (MAAMRLTLFRIVCLLPGCLA) form the signal peptide. A propeptide spans 21-97 (LPLSQEAGEV…PRCGVPDVAE (77 aa)) (activation peptide). The Cysteine switch motif lies at 88 to 95 (PRCGVPDV). Zn(2+) is bound at residue cysteine 90. Aspartate 156 is a binding site for Ca(2+). 2 residues coordinate Zn(2+): histidine 166 and aspartate 168. Ca(2+)-binding residues include aspartate 173, glycine 174, glycine 176, and threonine 178. Histidine 181 contributes to the Zn(2+) binding site. Residues glycine 188, glycine 190, and aspartate 192 each contribute to the Ca(2+) site. Histidine 194 contacts Zn(2+). Ca(2+) contacts are provided by aspartate 196 and glutamate 199. Histidine 217 lines the Zn(2+) pocket. Glutamate 218 is an active-site residue. Positions 221 and 227 each coordinate Zn(2+).

Belongs to the peptidase M10A family. Ca(2+) is required as a cofactor. The cofactor is Zn(2+).

Its subcellular location is the secreted. The protein localises to the extracellular space. It is found in the extracellular matrix. The enzyme catalyses Cleavage of 14-Ala-|-Leu-15 and 16-Tyr-|-Leu-17 in B chain of insulin. No action on collagen types I, II, IV, V. Cleaves gelatin chain alpha2(I) &gt; alpha1(I).. In terms of biological role, degrades casein, gelatins of types I, III, IV, and V, and fibronectin. Activates procollagenase. In Rattus norvegicus (Rat), this protein is Matrilysin (Mmp7).